The primary structure comprises 320 residues: MDGIVQNMFTFIVIVEIIIGWIGNGFIALVNCIHWYKRRKISALNQILTALAFSRIYLLLTVFTVIAVSTLYTHVLVTRRVVKLINFHLLFSNHFSMWLAACLGLYYFLKIAHFPNSIFVYLKMRINQVVSGTLLMSLGLLFLNTLLINSYIDTKIDDYREHLLYDFTSNNTASFYRVILVINNCIFTSIPFTLSQSTFLLLIFSLWRHYKKMQQHAQRCRDVLADAHIRVLQTMVTYVLLCAIFFLSLSMQILRSELLKNILYVRFCEIVAAVFPSGHSCVLICRDTNLRGTFLSVLSWLKQRFTSWIPNINCRSSCIF.

Over 1-8 the chain is Extracellular; the sequence is MDGIVQNM. A helical transmembrane segment spans residues 9-29; it reads FTFIVIVEIIIGWIGNGFIAL. Residues 30–55 lie on the Cytoplasmic side of the membrane; it reads VNCIHWYKRRKISALNQILTALAFSR. The helical transmembrane segment at 56-76 threads the bilayer; that stretch reads IYLLLTVFTVIAVSTLYTHVL. At 77–88 the chain is on the extracellular side; that stretch reads VTRRVVKLINFH. Residues 89–109 traverse the membrane as a helical segment; that stretch reads LLFSNHFSMWLAACLGLYYFL. Residues 110–128 lie on the Cytoplasmic side of the membrane; that stretch reads KIAHFPNSIFVYLKMRINQ. The chain crosses the membrane as a helical span at residues 129–149; sequence VVSGTLLMSLGLLFLNTLLIN. At 150-185 the chain is on the extracellular side; the sequence is SYIDTKIDDYREHLLYDFTSNNTASFYRVILVINNC. Residue asparagine 170 is glycosylated (N-linked (GlcNAc...) asparagine). A helical membrane pass occupies residues 186 to 206; sequence IFTSIPFTLSQSTFLLLIFSL. Residues 207–233 lie on the Cytoplasmic side of the membrane; it reads WRHYKKMQQHAQRCRDVLADAHIRVLQ. Residues 234 to 254 form a helical membrane-spanning segment; sequence TMVTYVLLCAIFFLSLSMQIL. Topologically, residues 255-264 are extracellular; the sequence is RSELLKNILY. A helical membrane pass occupies residues 265-285; it reads VRFCEIVAAVFPSGHSCVLIC. The Cytoplasmic portion of the chain corresponds to 286-320; it reads RDTNLRGTFLSVLSWLKQRFTSWIPNINCRSSCIF.

The protein belongs to the G-protein coupled receptor T2R family.

The protein resides in the membrane. Putative taste receptor which may play a role in the perception of bitterness. This Mus musculus (Mouse) protein is Taste receptor type 2 member 129.